The following is a 515-amino-acid chain: Lysosomal acid glucosylceramidase (515 aa).

Positions 1-19 (MAARLIGFFLFQAVSWAYG) are cleaved as a signal peptide. 2 disulfides stabilise this stretch: Cys23-Cys35 and Cys37-Cys42. N-linked (GlcNAc...) asparagine glycans are attached at residues Asn38 and Asn78. An N-linked (GlcNAc...) (high mannose) asparagine glycan is attached at Asn165. Glu254 acts as the Proton donor in catalysis. The N-linked (GlcNAc...) asparagine glycan is linked to Asn289. Glu358 functions as the Nucleophile in the catalytic mechanism. The N-linked (GlcNAc...) asparagine glycan is linked to Asn480.

Belongs to the glycosyl hydrolase 30 family. In terms of assembly, interacts with saposin-C. Interacts with SCARB2. Interacts with TCP1. Interacts with GRN; this interaction prevents aggregation of GBA1-SCARB2 complex via interaction with HSPA1A upon stress.

The protein resides in the lysosome membrane. The catalysed reaction is a beta-D-glucosyl-(1&lt;-&gt;1')-N-acylsphing-4-enine + H2O = an N-acylsphing-4-enine + D-glucose. The enzyme catalyses a beta-D-galactosyl-(1&lt;-&gt;1')-N-acylsphing-4-enine + H2O = an N-acylsphing-4-enine + D-galactose. It catalyses the reaction cholesteryl 3-beta-D-glucoside + H2O = cholesterol + D-glucose. It carries out the reaction a beta-D-glucosyl-(1&lt;-&gt;1')-N-acylsphing-4-enine + cholesterol = cholesteryl 3-beta-D-glucoside + an N-acylsphing-4-enine. The catalysed reaction is beta-D-glucosyl-(1&lt;-&gt;1')-N-hexadecanoylsphing-4-enine + cholesterol = cholesteryl 3-beta-D-glucoside + N-hexadecanoylsphing-4-enine. The enzyme catalyses beta-D-glucosyl-N-(9Z-octadecenoyl)-sphing-4E-enine + cholesterol = N-(9Z-octadecenoyl)-sphing-4-enine + cholesteryl 3-beta-D-glucoside. It catalyses the reaction beta-D-glucosyl-N-octanoylsphing-4E-enine + cholesterol = N-octanoylsphing-4-enine + cholesteryl 3-beta-D-glucoside. It carries out the reaction beta-D-glucosyl-N-dodecanoylsphing-4-enine + cholesterol = N-dodecanoylsphing-4-enine + cholesteryl 3-beta-D-glucoside. The catalysed reaction is beta-D-glucosyl-(1&lt;-&gt;1)-N-octadecanoylsphing-4-enine + cholesterol = N-octadecanoylsphing-4-enine + cholesteryl 3-beta-D-glucoside. The enzyme catalyses beta-D-glucosyl-(1&lt;-&gt;1')-N-(15Z-tetracosenoyl)-sphing-4-enine + cholesterol = N-(15Z-tetracosenoyl)-sphing-4-enine + cholesteryl 3-beta-D-glucoside. It catalyses the reaction a beta-D-galactosyl-(1&lt;-&gt;1')-N-acylsphing-4-enine + cholesterol = cholesteryl 3-beta-D-galactoside + an N-acylsphing-4-enine. It carries out the reaction 1-(beta-D-galactosyl)-N-dodecanoylsphing-4-enine + cholesterol = cholesteryl 3-beta-D-galactoside + N-dodecanoylsphing-4-enine. The catalysed reaction is a beta-D-xylosyl-(1&lt;-&gt;1')-N-acylsphing-4-enine + cholesterol = cholesteryl 3-beta-D-xyloside + an N-acylsphing-4-enine. The enzyme catalyses beta-D-xylosyl-(1&lt;-&gt;1')-N-(9Z-octadecenoyl)-sphing-4-enine + cholesterol = cholesteryl 3-beta-D-xyloside + N-(9Z-octadecenoyl)-sphing-4-enine. The protein operates within steroid metabolism; cholesterol metabolism. Its pathway is sphingolipid metabolism. Inhibited by conduritol B epoxide/CBE. In terms of biological role, glucosylceramidase that catalyzes, within the lysosomal compartment, the hydrolysis of glucosylceramides/GlcCers (such as beta-D-glucosyl-(1&lt;-&gt;1')-N-acylsphing-4-enine) into free ceramides (such as N-acylsphing-4-enine) and glucose. Plays a central role in the degradation of complex lipids and the turnover of cellular membranes. Through the production of ceramides, participates in the PKC-activated salvage pathway of ceramide formation. Catalyzes the glucosylation of cholesterol, through a transglucosylation reaction where glucose is transferred from GlcCer to cholesterol. GlcCer containing mono-unsaturated fatty acids (such as beta-D-glucosyl-N-(9Z-octadecenoyl)-sphing-4-enine) are preferred as glucose donors for cholesterol glucosylation when compared with GlcCer containing same chain length of saturated fatty acids (such as beta-D-glucosyl-N-octadecanoyl-sphing-4-enine). Under specific conditions, may alternatively catalyze the reverse reaction, transferring glucose from cholesteryl 3-beta-D-glucoside to ceramide. Can also hydrolyze cholesteryl 3-beta-D-glucoside producing glucose and cholesterol. Catalyzes the hydrolysis of galactosylceramides/GalCers (such as beta-D-galactosyl-(1&lt;-&gt;1')-N-acylsphing-4-enine), as well as the transfer of galactose between GalCers and cholesterol in vitro, but with lower activity than with GlcCers. Contrary to GlcCer and GalCer, xylosylceramide/XylCer (such as beta-D-xyosyl-(1&lt;-&gt;1')-N-acylsphing-4-enine) is not a good substrate for hydrolysis, however it is a good xylose donor for transxylosylation activity to form cholesteryl 3-beta-D-xyloside. This Mus musculus (Mouse) protein is Lysosomal acid glucosylceramidase (Gba1).